Reading from the N-terminus, the 445-residue chain is Neuropeptide Y receptor type 5 (445 aa).

The Extracellular segment spans residues 1–42; it reads MEFKLEEHFNKTFVTENNTAAARNAAFPAWEDYRGSVDDLQY. Asn10 and Asn17 each carry an N-linked (GlcNAc...) asparagine glycan. A helical transmembrane segment spans residues 43 to 63; that stretch reads FLIGLYTFVSLLGFMGNLLIL. Over 64–77 the chain is Cytoplasmic; sequence MAVMKKRNQKTTVN. A helical membrane pass occupies residues 78-98; sequence FLIGNLAFSDILVVLFCSPFT. The Extracellular portion of the chain corresponds to 99–117; sequence LTSVLLDQWMFGKAMCHIM. An intrachain disulfide couples Cys114 to Cys198. Residues 118–138 traverse the membrane as a helical segment; sequence PFLQCVSVLVSTLILISIAIV. Residues 139–156 are Cytoplasmic-facing; it reads RYHMIKHPISNNLTANHG. Residues 157 to 177 traverse the membrane as a helical segment; sequence YFLIATVWTLGFAICSPLPVF. Over 178–208 the chain is Extracellular; the sequence is HSLVELKETFGSALLSSKYLCVESWPSDSYR. The chain crosses the membrane as a helical span at residues 209-229; it reads IAFTISLLLVQYILPLVCLTV. At 230 to 368 the chain is on the cytoplasmic side; sequence SHTSVCRSIS…KKRSRSVFYR (139 aa). The chain crosses the membrane as a helical span at residues 369–389; it reads LTILILVFAVSWMPLHVFHVV. The Extracellular portion of the chain corresponds to 390-406; it reads TDFNDNLISNRHFKLVY. A helical membrane pass occupies residues 407–427; the sequence is CICHLLGMMSCCLNPILYGFL. At 428 to 445 the chain is on the cytoplasmic side; the sequence is NNGIKADLRALIHCLHMS. The S-palmitoyl cysteine moiety is linked to residue Cys441.

Belongs to the G-protein coupled receptor 1 family. In terms of tissue distribution, brain; hypothalamus.

It localises to the cell membrane. Receptor for neuropeptide Y and peptide YY. The activity of this receptor is mediated by G proteins that inhibit adenylate cyclase activity. Seems to be associated with food intake. Could be involved in feeding disorders. This Rattus norvegicus (Rat) protein is Neuropeptide Y receptor type 5 (Npy5r).